The primary structure comprises 170 residues: Urease accessory protein UreE (170 aa).

Belongs to the UreE family.

It localises to the cytoplasm. Functionally, involved in urease metallocenter assembly. Binds nickel. Probably functions as a nickel donor during metallocenter assembly. This is Urease accessory protein UreE from Helicobacter pylori (strain Shi470).